Here is a 695-residue protein sequence, read N- to C-terminus: ATP-dependent zinc metalloprotease FTSH 2, chloroplastic (695 aa).

A chloroplast-targeting transit peptide spans 1 to 47 (MAASSACLVGNGLSVNTTTKQRLSKHFSGRQTSFSSVIRTSKVNVVK). The N-terminal 35 residues, 48 to 82 (ASLDGKKKQEGRRDFLKILLGNAGVGLVASGKANA), are a transit peptide targeting the thylakoid. The Lumenal, thylakoid segment spans residues 83-167 (DEQGVSSSRM…AHNAQEDQGS (85 aa)). A helical membrane pass occupies residues 168–188 (VLFNLIGNLAFPALLIGGLFL). Topologically, residues 189–695 (LSRRSGGGMG…PASAPTPAAV (507 aa)) are stromal. Position 267 to 274 (267 to 274 (GPPGTGKT)) interacts with ATP. Residue H488 coordinates Zn(2+). E489 is an active-site residue. Residues H492 and D566 each coordinate Zn(2+). A disordered region spans residues 673 to 695 (PPENRVPSSTTTTPASAPTPAAV). The span at 679-695 (PSSTTTTPASAPTPAAV) shows a compositional bias: low complexity.

In the N-terminal section; belongs to the AAA ATPase family. The protein in the C-terminal section; belongs to the peptidase M41 family. Interacts with CHIP and FTSH5. Heterohexamers with FTSH1, FTSH5 and FTSH8. May also form homooligomers. Zn(2+) is required as a cofactor. Post-translationally, the FTSH2 precursor is ubiquitinated by CHIP in the cytoplasm. Expressed in cotyledons, cauline and rosette leaves, stems, sepals, flovers and siliques. Very low in roots.

It localises to the plastid. The protein localises to the chloroplast thylakoid membrane. Its function is as follows. Part of a complex that function as an ATP-dependent zinc metallopeptidase. Involved in the thylakoid formation and in the removal of damaged D1 in the photosystem II, preventing cell death under high-intensity light conditions, but not involved in thermotolerance. The sequence is that of ATP-dependent zinc metalloprotease FTSH 2, chloroplastic (FTSH2) from Arabidopsis thaliana (Mouse-ear cress).